Here is an 86-residue protein sequence, read N- to C-terminus: Cell division topological specificity factor (86 aa).

This sequence belongs to the MinE family.

Prevents the cell division inhibition by proteins MinC and MinD at internal division sites while permitting inhibition at polar sites. This ensures cell division at the proper site by restricting the formation of a division septum at the midpoint of the long axis of the cell. The protein is Cell division topological specificity factor of Alteromonas mediterranea (strain DSM 17117 / CIP 110805 / LMG 28347 / Deep ecotype).